A 127-amino-acid polypeptide reads, in one-letter code: Unclassified hydrophobin 5 (127 aa).

Positions 1–24 are cleaved as a signal peptide; sequence MFNKQTNAIVLLFTFALFATLAVA. Cystine bridges form between Cys-39–Cys-107, Cys-46–Cys-101, Cys-47–Cys-92, and Cys-108–Cys-121.

Belongs to the fungal hydrophobin family. In terms of assembly, self-assembles to form functional amyloid fibrils called rodlets. Self-assembly into fibrillar rodlets occurs spontaneously at hydrophobic:hydrophilic interfaces and the rodlets further associate laterally to form amphipathic monolayers.

It localises to the secreted. The protein localises to the cell wall. Functionally, aerial growth, conidiation, and dispersal of filamentous fungi in the environment rely upon a capability of their secreting small amphipathic proteins called hydrophobins (HPBs) with low sequence identity. Class I can self-assemble into an outermost layer of rodlet bundles on aerial cell surfaces, conferring cellular hydrophobicity that supports fungal growth, development and dispersal; whereas Class II form highly ordered films at water-air interfaces through intermolecular interactions but contribute nothing to the rodlet structure. The protein is Unclassified hydrophobin 5 of Pleurotus ostreatus (strain PC15) (Oyster mushroom).